Consider the following 525-residue polypeptide: Protein shisa-6 (525 aa).

Residues Met1–Ala30 form the signal peptide. At Ala31–Thr180 the chain is on the extracellular side. N-linked (GlcNAc...) asparagine glycosylation is found at Asn37 and Asn62. A helical transmembrane segment spans residues Asn181–Ala201. Topologically, residues Lys202–Val525 are cytoplasmic. The tract at residues Ile241–Pro294 is disordered. A compositionally biased stretch (polar residues) spans Ala243–His261. A phosphoserine mark is found at Ser416, Ser422, and Ser434. Phosphothreonine is present on Thr458. Residues Met469 to Phe495 form a disordered region. Positions Pro473–Ala489 are enriched in polar residues. Thr502 bears the Phosphothreonine mark. The short motif at Glu522–Val525 is the PDZ-binding element.

The protein belongs to the shisa family. As to quaternary structure, component of the postsynaptic hippocampal AMPA-type glutamate receptor (AMPAR) complex, at least composed of pore forming AMPAR subunits GRIA1, GRIA2 and GRIA3 and AMPAR auxiliary proteins SHISA6 and SHISA7. Interacts (via PDZ-binding motif) with DLG4/PSD-95 (via PDZ domain); the interaction is direct. Post-translationally, N-glycosylated. In terms of tissue distribution, highly expressed in cerebellum and hippocampal neurons: CA1 stratum oriens and stratum radiatum, CA3 stratum oriens and stratum lucidum, and the dentate gyrus polymorphic layer. Expressed in other brain structures including olfactory bulb, cortex, amygdala and midbrain (at protein level). Also expressed in a subset of spermatogonial stem cells. Also expressed in eye, heart, kidney, lung, muscle and spleen. Isoform 2: Specifically expressed in hippocampus.

It localises to the postsynaptic density membrane. In terms of biological role, involved in maintenance of high-frequency synaptic transmission at hippocampal CA3-CA1 synapses. Regulates AMPA-type glutamate receptor (AMPAR) immobilization at postsynaptic density keeping the channels in an activated state in the presence of glutamate and preventing synaptic depression. May play a role in self-renewal and differentiation of spermatogonial stem cells by inhibiting canonical Wnt signaling pathway. The protein is Protein shisa-6 of Mus musculus (Mouse).